A 512-amino-acid chain; its full sequence is Pantothenate transporter FEN2 (512 aa).

Over 1–27 (MMKESKSITQHEVERESVSSKRAIKKR) the chain is Cytoplasmic. The chain crosses the membrane as a helical span at residues 28–48 (LLLFKIDLFVLSFVCLQYWIN). Topologically, residues 49–79 (YVDRVGFTNAYISGMKEDLKMVGNDLTVSNT) are extracellular. The chain crosses the membrane as a helical span at residues 80 to 100 (VFMIGYIVGMVPNNLMLLCVP). Residues 101–102 (PR) are Cytoplasmic-facing. A helical transmembrane segment spans residues 103 to 123 (IWLSFCTFAWGLLTLGMYKVT). The Extracellular segment spans residues 124–132 (SFKHICAIR). Residues 133-153 (FFQALFESCTFSGTHFVLGSW) traverse the membrane as a helical segment. The Cytoplasmic portion of the chain corresponds to 154 to 164 (YKEDELPIRSA). A helical membrane pass occupies residues 165 to 185 (IFTGSGLVGSMFSGFMQTSIF). Residues 186-198 (THLNGRNGLAGWR) are Extracellular-facing. The chain crosses the membrane as a helical span at residues 199–219 (WLFIIDFCITLPIAIYGFIFF). The Cytoplasmic portion of the chain corresponds to 220 to 271 (PGLPDQTSAVSKFSMTRYIFNEQELHYARRRLPARDESTRLDWSTIPRVLKR). A helical membrane pass occupies residues 272–292 (WHWWMFSLVWVLGGENLGFAS). Over 293–312 (NSTFALWLQNQKYTLAQRNN) the chain is Extracellular. Residues 313-333 (YPSGIFAVGIVSTLCSAVYMS) form a helical membrane-spanning segment. The Cytoplasmic segment spans residues 334–342 (KIPRARHWH). The chain crosses the membrane as a helical span at residues 343-363 (VSVFISLVMVIVAVLIRADPL). Over 364-372 (NPKVVFSAQ) the chain is Extracellular. The helical transmembrane segment at 373–393 (YLGGVAYAGQAVFFSWANIIC) threads the bilayer. Residues 394–401 (HADLQERA) are Cytoplasmic-facing. Residues 402–422 (IVLASMNMFSGAVNAWWSILF) traverse the membrane as a helical segment. The Extracellular segment spans residues 423 to 434 (FASDMVPKFERG). Residues 435 to 455 (CYALLATAISSGIVSVVIRSL) traverse the membrane as a helical segment. The Cytoplasmic segment spans residues 456–512 (QIKENLSKKQVPYIDANDMPGEDDDDDNQDNENDGDDESMEVELHNEEMAEISNPFR). The disordered stretch occupies residues 468–512 (YIDANDMPGEDDDDDNQDNENDGDDESMEVELHNEEMAEISNPFR). The segment covering 475-496 (PGEDDDDDNQDNENDGDDESME) has biased composition (acidic residues).

This sequence belongs to the major facilitator superfamily. Allantoate permease family.

The protein resides in the cell membrane. Its function is as follows. Transports pantothenate into the cell. Also involved in the catabolite repression-mediated regulation of ergosterol biosynthesis and in fenpropimorph resistance. In Saccharomyces cerevisiae (strain ATCC 204508 / S288c) (Baker's yeast), this protein is Pantothenate transporter FEN2 (FEN2).